A 340-amino-acid chain; its full sequence is NADH-quinone oxidoreductase subunit H (340 aa).

Helical transmembrane passes span 4–24 (TIGI…PLLI), 78–98 (YLFV…WAVI), 113–133 (VLYL…AGWA), 151–171 (VSYE…AGSM), 184–204 (MLHW…ISGI), 244–264 (SMIL…LSPF), 273–293 (IFFI…FLFV), and 316–336 (VLIP…VAHV).

Belongs to the complex I subunit 1 family. In terms of assembly, NDH-1 is composed of 14 different subunits. Subunits NuoA, H, J, K, L, M, N constitute the membrane sector of the complex.

The protein resides in the cell inner membrane. It carries out the reaction a quinone + NADH + 5 H(+)(in) = a quinol + NAD(+) + 4 H(+)(out). NDH-1 shuttles electrons from NADH, via FMN and iron-sulfur (Fe-S) centers, to quinones in the respiratory chain. The immediate electron acceptor for the enzyme in this species is believed to be ubiquinone. Couples the redox reaction to proton translocation (for every two electrons transferred, four hydrogen ions are translocated across the cytoplasmic membrane), and thus conserves the redox energy in a proton gradient. This subunit may bind ubiquinone. The chain is NADH-quinone oxidoreductase subunit H from Legionella pneumophila subsp. pneumophila (strain Philadelphia 1 / ATCC 33152 / DSM 7513).